We begin with the raw amino-acid sequence, 316 residues long: Probable cell division protein WhiA (316 aa).

The H-T-H motif DNA-binding region spans 275–309 (TLKELGEMVASGKISKSGINHRLRKLDEIAEQLRT).

This sequence belongs to the WhiA family.

It localises to the cytoplasm. The protein localises to the nucleoid. Involved in cell division and chromosome segregation. May influence the activity of FtsZ. Binds DNA, but does not seem to function as a transcription factor. This Bacillus subtilis (strain 168) protein is Probable cell division protein WhiA.